A 588-amino-acid chain; its full sequence is Probable fumarate reductase Ifc3 (588 aa).

The signal sequence occupies residues 1–22 (MKLKYLVSAMALVVLSSGTAMA). Heme c-binding residues include H31, C37, C40, H41, C58, C61, H62, H78, H81, C87, C90, H91, G93, H94, C101, C104, and H105. A flavoprotein-like region spans residues 135–588 (AIAAGPSETT…DNAAKHALDK (454 aa)). Residues A154, D173, N181, S182, G187, and G188 each coordinate FAD. A fumarate-binding site is contributed by G187. A succinate-binding site is contributed by G187. Residue R218 coordinates heme c. 2 residues coordinate FAD: V295 and D361. The succinate site is built by H382, S394, and E395. 2 residues coordinate fumarate: S394 and E395. Residue R419 is the Proton donor of the active site. H521 lines the fumarate pocket. H521 is a succinate binding site. E551 contacts FAD. Fumarate contacts are provided by R561 and G564. The succinate site is built by R561 and G564. Positions 564, 566, and 567 each coordinate FAD.

In terms of assembly, homodimer. The cofactor is FAD. It depends on heme c as a cofactor.

The protein localises to the periplasm. Functionally, flavocytochrome that catalyzes the reduction of fumarate to succinate in vitro. Is essentially unidirectional, catalyzing only fumarate reduction. In vitro, can use the artificial electron donor methyl viologen. May be involved in an alternative route for electron transport to Fe(3+). The protein is Probable fumarate reductase Ifc3 of Shewanella frigidimarina (strain NCIMB 400).